Reading from the N-terminus, the 206-residue chain is 21.9 kDa heat shock protein (206 aa).

The N-terminal stretch at 1–29 (MAAVAEREVLGMVAAVAAMVVMMAPPAAA) is a signal peptide. The sHSP domain maps to 65–187 (EPAAVALARC…GREPRVVAID (123 aa)). The Cell attachment site signature appears at 94–96 (RGD).

It belongs to the small heat shock protein (HSP20) family. As to quaternary structure, may form oligomeric structures.

It is found in the endoplasmic reticulum. This Oryza sativa subsp. japonica (Rice) protein is 21.9 kDa heat shock protein (HSP21.9).